Consider the following 371-residue polypeptide: Proton-coupled zinc antiporter SLC30A2 (371 aa).

At 1–69 the chain is on the cytoplasmic side; the sequence is MQTMDKQNLL…DPEKQRARRK (69 aa). The Mitochondrial localization signal signature appears at 47–50; it reads HYCH. Position 49 (C49) interacts with Zn(2+). A helical membrane pass occupies residues 70-90; it reads LYVASAICLVFMIGEIIGGYL. Over 91–99 the chain is Lumenal; it reads AQSLAIMTD. Residues 100–120 form a helical membrane-spanning segment; the sequence is AAHLLTDFASMLISLFALWVS. Zn(2+) contacts are provided by H102 and D106. The Cytoplasmic portion of the chain corresponds to 121-136; sequence SRPATKTMNFGWHRAE. A helical membrane pass occupies residues 137–157; sequence ILGALLSVLSIWVVTGVLVYL. Topologically, residues 158–172 are lumenal; sequence AVQRLISGDYEIKGD. The chain crosses the membrane as a helical span at residues 173-193; that stretch reads TMLITSGCAVAVNLIMGLALH. At 194 to 219 the chain is on the cytoplasmic side; it reads QSGHGHSHGNSRDDSSQQQNPSVRAA. A helical transmembrane segment spans residues 220 to 240; sequence FIHVIGDLLQSVGVLVAAYII. Positions 222 and 226 each coordinate Zn(2+). At 241–248 the chain is on the lumenal side; it reads YFKPEYKY. The helical transmembrane segment at 249-269 threads the bilayer; that stretch reads VDPICTFLFSILVLGTTLTIL. Residues 270 to 303 lie on the Cytoplasmic side of the membrane; the sequence is RDVILVLMEGTPKGVDFTTVKNLLLSVDGVEALH. The Lysosomal targeting motif motif lies at 293–294; the sequence is LL. The residue at position 295 (S295) is a Phosphoserine. Zn(2+) is bound by residues H303, H320, and E354. Residues 304 to 324 form a helical membrane-spanning segment; sequence SLHIWALTVAQPVLSVHIAIA. At 325–371 the chain is on the lumenal side; that stretch reads QNADAQAVLKVARDRLQGKFNFHTMTIQIEKYSEDMKNCQACQGPLE.

The protein belongs to the cation diffusion facilitator (CDF) transporter (TC 2.A.4) family. SLC30A subfamily. In terms of assembly, homodimer. Interacts (via lysosomal targeting motif) with AP3D1; in AP-3-mediated transport to lysosomes. Interacts with TMEM163. Phosphorylated at Ser-295. Phosphorylation at Ser-295 prevents localization to lysosomes. Dephosphorylation of Ser-295 which triggers localization to lysosomes, accumulation of zinc into lysosomes and lysosomal-mediated cell death is induced by TNF-alpha.

The protein resides in the cytoplasmic vesicle. Its subcellular location is the secretory vesicle membrane. It is found in the zymogen granule membrane. It localises to the endosome membrane. The protein localises to the lysosome membrane. The protein resides in the mitochondrion inner membrane. Its subcellular location is the cell membrane. The enzyme catalyses Zn(2+)(in) + 2 H(+)(out) = Zn(2+)(out) + 2 H(+)(in). Functionally, electroneutral proton-coupled antiporter concentrating zinc ions into a variety of intracellular organelles including endosomes, zymogen granules and mitochondria. Thereby, plays a crucial role in cellular zinc homeostasis to confer upon cells protection against its potential cytotoxicity. Regulates the zinc concentration of milk, through the transport of zinc ions into secretory vesicles of mammary cells. By concentrating zinc ions into lysosomes participates to lysosomal-mediated cell death during early mammary gland involution. Its function is as follows. Electroneutral proton-coupled antiporter mediating the efflux of zinc ions through the plasma membrane. This chain is Proton-coupled zinc antiporter SLC30A2, found in Mus musculus (Mouse).